Reading from the N-terminus, the 353-residue chain is D-alanine--D-alanine ligase A (353 aa).

One can recognise an ATP-grasp domain in the interval 141–346; sequence KRLVNEAGLS…YPEIINRLVA (206 aa). 169–224 contacts ATP; the sequence is EQALGLPIFIKPARQGSSVGVHKVVTEADYQAAMSDGFTYDDKLLAEEFIQAREVE. Mg(2+)-binding residues include Asp-300, Glu-313, and Asn-315.

The protein belongs to the D-alanine--D-alanine ligase family. Mg(2+) is required as a cofactor. Mn(2+) serves as cofactor.

The protein resides in the cytoplasm. The catalysed reaction is 2 D-alanine + ATP = D-alanyl-D-alanine + ADP + phosphate + H(+). Its pathway is cell wall biogenesis; peptidoglycan biosynthesis. Cell wall formation. In Brucella suis biovar 1 (strain 1330), this protein is D-alanine--D-alanine ligase A.